The primary structure comprises 138 residues: Small ribosomal subunit protein uS11c (138 aa).

Positions 1–24 (MIKPIPRISSRRNGRIGSRKTGRR) are disordered. The segment covering 9 to 24 (SSRRNGRIGSRKTGRR) has biased composition (basic residues).

This sequence belongs to the universal ribosomal protein uS11 family. In terms of assembly, part of the 30S ribosomal subunit.

The protein resides in the plastid. Its subcellular location is the chloroplast. This Lemna minor (Common duckweed) protein is Small ribosomal subunit protein uS11c.